We begin with the raw amino-acid sequence, 373 residues long: MSGSSRRGERLRVAVVFGGRSNEHAISCVSAGSILRNLDPRRFEVIAIGITPQGSWVLTDGNPDALAITDRRLPEVSSQSGTELALPADPRWGGQLVSLPPGAGEVLASVDVVFPVLHGPYGEDGTIQGLLELAGVPYVGAGVLASAAGMDKEFTKKLWSAAGLPIGPHAVLRPSRQSLDREELQRLGLPAYVKPARGGSSIGVSRVSSFDELPAAIAAARRHDPKVIVEAAINGRELECGVLEFPDGRLEASTLGEIRVAGVRGREDGFYDFETKYLDDAAELDVPAKVEDDVADAVRQLAIRAFEAIDCQGLARVDFFLTDDGPVINELNTMPGFTTISMYPRMWVASGVDYPTLLATMVETALSRGIGLR.

Residues 156-363 (KKLWSAAGLP…YPTLLATMVE (208 aa)) enclose the ATP-grasp domain. Residue 184-239 (LQRLGLPAYVKPARGGSSIGVSRVSSFDELPAAIAAARRHDPKVIVEAAINGRELE) coordinates ATP. Mg(2+) is bound by residues Asp-318, Glu-330, and Asn-332.

This sequence belongs to the D-alanine--D-alanine ligase family. Requires Mg(2+) as cofactor. It depends on Mn(2+) as a cofactor.

It is found in the cytoplasm. It catalyses the reaction 2 D-alanine + ATP = D-alanyl-D-alanine + ADP + phosphate + H(+). The protein operates within cell wall biogenesis; peptidoglycan biosynthesis. Cell wall formation. The polypeptide is D-alanine--D-alanine ligase (Mycobacterium ulcerans (strain Agy99)).